Here is a 264-residue protein sequence, read N- to C-terminus: uncharacterized protein (264 aa).

Positions 1 to 26 (MMKKLFHSTLIVLLFFSFFGVQPIHA) are cleaved as a signal peptide.

This is an uncharacterized protein from Bacillus subtilis (strain 168).